A 155-amino-acid chain; its full sequence is Ribosomal RNA large subunit methyltransferase H (155 aa).

Residues Leu72, Gly103, and 122 to 127 (LSPLTL) each bind S-adenosyl-L-methionine.

The protein belongs to the RNA methyltransferase RlmH family. In terms of assembly, homodimer.

The protein localises to the cytoplasm. It carries out the reaction pseudouridine(1915) in 23S rRNA + S-adenosyl-L-methionine = N(3)-methylpseudouridine(1915) in 23S rRNA + S-adenosyl-L-homocysteine + H(+). Functionally, specifically methylates the pseudouridine at position 1915 (m3Psi1915) in 23S rRNA. The polypeptide is Ribosomal RNA large subunit methyltransferase H (Histophilus somni (strain 129Pt) (Haemophilus somnus)).